A 133-amino-acid chain; its full sequence is Large ribosomal subunit protein uL11 (133 aa).

It belongs to the universal ribosomal protein uL11 family. In terms of assembly, part of the ribosomal stalk of the 50S ribosomal subunit. Interacts with L10 and the large rRNA to form the base of the stalk. L10 forms an elongated spine to which 2 L12 dimers bind in a sequential fashion forming a pentameric L10(L12)2(L12)2 complex. One or more lysine residues are methylated.

Functionally, forms part of the ribosomal stalk which helps the ribosome interact with GTP-bound translation factors. This is Large ribosomal subunit protein uL11 from Geobacillus stearothermophilus (Bacillus stearothermophilus).